Consider the following 575-residue polypeptide: Arginine--tRNA ligase (575 aa).

The 'HIGH' region signature appears at 136-146; sequence ANPTGPLHVGH.

This sequence belongs to the class-I aminoacyl-tRNA synthetase family. Monomer.

It localises to the cytoplasm. It carries out the reaction tRNA(Arg) + L-arginine + ATP = L-arginyl-tRNA(Arg) + AMP + diphosphate. The polypeptide is Arginine--tRNA ligase (Polynucleobacter necessarius subsp. necessarius (strain STIR1)).